Here is a 1137-residue protein sequence, read N- to C-terminus: MASRPAASSPVEARAPVGGQEAGGPSAATQGEAAGAPLAHGHHVYCQRVNGVMVLSDKTPGSASYRISDNNFVQCGSNCTMIIDGDVVRGRPQDPGAAASPAPFVAVTNIGAGSDGGTAVVAFGGTPRRSAGTSTGTQTADVPTEALGGPPPPPRFTLGGGCCSCRDTRRRSAVFGGEGDPVGPAEFVSDDRSSDSDSDDSEDTDSETLSHASSDVSGGATYDDALDSDSSSDDSLQIDGPVCRPWSNDTAPLDVCPGTPGPGADAGGPSAVDPHAPTPEAGAGLAADPAVARDDAEGLSDPRPRLGTGTAYPVPLELTPENAEAVARFLGDAVNREPALMLEYFCRCAREETKRVPPRTFGSPPRLTEDDFGLLNYALVEMQRLCLDVPPVPPNAYMPYYLREYVTRLVNGFKPLVSRSARLYRILGVLVHLRIRTREASFEEWLRSKEVALDFGLTERLREHEAQLVILAQALDHYDCLIHSTPHTLVERGLQSALKYEEFYLKRFGGHYMESVFQMYTRIAGFLACRATRGMRHIALGREGSWWEMFKFFFHRLYDHQIVPSTPAMLNLGTRNYYTSSCYLVNPQATTNKATLRAITSNVSAILARNGGIGLCVQAFNDSGPGTASVMPALKVLDSLVAAHNKESARPTGACVYLEPWHTDVRAVLRMKGVLAGEEAQRCDNIFSALWMPDLFFKRLIRHLDGEKNVTWTLFDRDTSMSLADFHGEEFEKLYQHLEVMGFGEQIPIQELAYGIVRSAATTGSPFVMFKDAVNRHYIYDTQGAAIAGSNLCTEIVHPASKRSSGVCNLGSVNLARCVSRQTFDFGRLRDAVQACVLMVNIMIDSTLQPTPQCTRGNDNLRSMGIGMQGLHTACLKLGLDLESAEFQDLNKHIAEVMLLSAMKTSNALCVRGARPFNHFKRSMYRAGRFHWERFPDARPRYEGEWEMLRQSMMKHGLRNSQFVALMPTAASAQISDVSEGFAPLFTNLFSKVTRDGETLRPNTLLLKELERTFSGKRLLEVMDSLDAKQWSVAQALPCLEPTHPLRRFKTAFDYDQKLLIDLCADRAPYVDHSQSMTLYVTEKADGTLPASTLVRLLVHAYKRGLKTGMYYCKVRKATNSGVFGGDDNIVCMSCAL.

The disordered stretch occupies residues 1-32 (MASRPAASSPVEARAPVGGQEAGGPSAATQGE). The short motif at 64–84 (SYRISDNNFVQCGSNCTMIID) is the RIP homotypic interaction motif (RHIM) element. 2 disordered regions span residues 124–159 (GGTPRRSAGTSTGTQTADVPTEALGGPPPPPRFTLG) and 173–315 (AVFG…YPVP). The span at 131 to 141 (AGTSTGTQTAD) shows a compositional bias: polar residues. Residues 196-206 (SDSDDSEDTDS) show a composition bias toward acidic residues. Residues 281–290 (AGAGLAADPA) show a composition bias toward low complexity. The span at 291-304 (VARDDAEGLSDPRP) shows a compositional bias: basic and acidic residues. Substrate contacts are provided by residues Thr-566, 581–582 (SC), Gly-612, 791–795 (NLCTE), and 968–972 (PTAAS). An intrachain disulfide couples Cys-582 to Cys-808. Asn-791 (proton acceptor) is an active-site residue. The Cysteine radical intermediate role is filled by Cys-793. Glu-795 acts as the Proton acceptor in catalysis.

The protein belongs to the ribonucleoside diphosphate reductase large chain family. As to quaternary structure, heterotetramer composed of a homodimer of the large subunit (R1) and a homodimer of the small subunit (R2). Larger multisubunit protein complex are also active, composed of (R1)n(R2)n. Self-assembles (via RIP homotypic interaction motif/RHIM) into homomeric fibrillar amyloid structures. Interacts (via RHIM) with human RIPK1 (via RHIM). Interacts (via RHIM) with human RIPK3 (via RHIM); the interaction leads to heteromeric amyloid assemblies. Interacts (via RHIM) with human ZBP1 (via RHIM); the interaction leads to heteromeric amyloid assemblies. Interacts (via C-terminus) with host CASP8.

The catalysed reaction is a 2'-deoxyribonucleoside 5'-diphosphate + [thioredoxin]-disulfide + H2O = a ribonucleoside 5'-diphosphate + [thioredoxin]-dithiol. In terms of biological role, ribonucleoside-diphosphate reductase holoenzyme that provides the precursors necessary for viral DNA synthesis. Allows virus growth in non-dividing cells, as well as reactivation from latency in infected hosts. Catalyzes the biosynthesis of deoxyribonucleotides from the corresponding ribonucleotides. Prevents host necroptosis by targeting host RIPK1 and RIPK3, thereby hampering the formation of necroptotic RIPK1-RIPK3 complexes. Forms hetero-amyloid structures with host proteins RIPK3 or ZBP1 which may prevent RIPK3- and ZBP1-mediated necroptosis. In addition, inhibits extrinsic apoptosis by targeting host CASP8. This Human herpesvirus 1 (strain 17) (HHV-1) protein is Ribonucleoside-diphosphate reductase large subunit.